Reading from the N-terminus, the 634-residue chain is Probable potassium transport system protein Kup (634 aa).

12 helical membrane passes run 21-41 (LVIGAIGVVFGDIGTSPLYTL), 58-78 (VLGILSLVFWALMLVVTLKYV), 110-130 (MYVVGILGIFGASLFFGDGVI), 147-167 (APKLEPFVVPITLVVLSMLFL), 179-199 (AFGPITLLWFFALGAIGVYNM), 223-243 (WHAVFVLGAVVLAVTGGEALY), 258-278 (WQFVVLPMLTLTYLGQGALVL), 296-316 (ALYPMIVLATAATVIASQALI), 348-368 (IYVPAVNWCLLALVAVAVIGF), 377-397 (AYGVSVTGTMLITTVLMIIYA), 403-423 (VPAPLLWLFALVFLAVDCAFF), and 427-447 (IIKFLDGAWFPLLLGLILFTL).

This sequence belongs to the HAK/KUP transporter (TC 2.A.72) family.

The protein resides in the cell inner membrane. It catalyses the reaction K(+)(in) + H(+)(in) = K(+)(out) + H(+)(out). In terms of biological role, transport of potassium into the cell. Likely operates as a K(+):H(+) symporter. The polypeptide is Probable potassium transport system protein Kup (Xanthomonas axonopodis pv. citri (strain 306)).